The sequence spans 651 residues: Probable potassium transport system protein Kup 3 (651 aa).

12 consecutive transmembrane segments (helical) span residues 38–58 (FWAL…TSPL), 77–97 (VLVL…VTAK), 129–149 (LFLL…SMIT), 166–186 (PALE…LFGV), 197–217 (FFGP…AMHI), 242–262 (IGLV…ALYA), 276–296 (WLGF…ALVL), 314–334 (LVLP…QAVI), 366–386 (IYLP…VLLF), 396–416 (YGIA…VVIW), 421–441 (WSWP…AMFF), and 448–468 (LLDG…VIWT).

The protein belongs to the HAK/KUP transporter (TC 2.A.72) family.

It localises to the cell inner membrane. The enzyme catalyses K(+)(in) + H(+)(in) = K(+)(out) + H(+)(out). In terms of biological role, transport of potassium into the cell. Likely operates as a K(+):H(+) symporter. This chain is Probable potassium transport system protein Kup 3, found in Rhodopseudomonas palustris (strain ATCC BAA-98 / CGA009).